A 315-amino-acid chain; its full sequence is L-lactate dehydrogenase (315 aa).

Positions 14, 35, and 66 each coordinate NAD(+). Substrate contacts are provided by residues glutamine 83, arginine 89, and 121–124 (NPVD). NAD(+)-binding positions include 119-121 (VAN) and serine 144. Residue 149 to 152 (DTAR) coordinates substrate. The Proton acceptor role is filled by histidine 176. A Phosphotyrosine modification is found at tyrosine 221. Residue threonine 230 participates in substrate binding.

Belongs to the LDH/MDH superfamily. LDH family. In terms of assembly, homotetramer.

The protein localises to the cytoplasm. It catalyses the reaction (S)-lactate + NAD(+) = pyruvate + NADH + H(+). It participates in fermentation; pyruvate fermentation to lactate; (S)-lactate from pyruvate: step 1/1. In terms of biological role, catalyzes the conversion of lactate to pyruvate. This Mesomycoplasma hyopneumoniae (strain 232) (Mycoplasma hyopneumoniae) protein is L-lactate dehydrogenase.